The following is a 101-amino-acid chain: NADH-quinone oxidoreductase subunit K (101 aa).

A run of 3 helical transmembrane segments spans residues 4–24, 30–50, and 62–82; these read LGHL…GIFL, IVLL…FIAF, and FVFF…AILV.

It belongs to the complex I subunit 4L family. NDH-1 is composed of 14 different subunits. Subunits NuoA, H, J, K, L, M, N constitute the membrane sector of the complex.

The protein resides in the cell inner membrane. It carries out the reaction a quinone + NADH + 5 H(+)(in) = a quinol + NAD(+) + 4 H(+)(out). NDH-1 shuttles electrons from NADH, via FMN and iron-sulfur (Fe-S) centers, to quinones in the respiratory chain. The immediate electron acceptor for the enzyme in this species is believed to be ubiquinone. Couples the redox reaction to proton translocation (for every two electrons transferred, four hydrogen ions are translocated across the cytoplasmic membrane), and thus conserves the redox energy in a proton gradient. In Xylella fastidiosa (strain 9a5c), this protein is NADH-quinone oxidoreductase subunit K.